The sequence spans 207 residues: Protein GET1 (207 aa).

Over 1–4 (MPSL) the chain is Lumenal. The chain crosses the membrane as a helical span at residues 5–24 (LISVLFLHIAIYIINTIGAS). Over 25–110 (TIDSLLWLIY…LFDVAVKALR (86 aa)) the chain is Cytoplasmic. A coiled-coil region spans residues 44–97 (MAREQHQMKLEVVQLKREMNATSSQDEFAKWAKLRRRHDKALEEYEVKNKQFSR). The chain crosses the membrane as a helical span at residues 111–131 (WAGTSGLILLLQFWFSKTPIF). The Lumenal segment spans residues 132 to 155 (TLPPSWIPWQVEWVLSFPRAPMGT). Residues 156–172 (VSIQVWGGACAVMVALV) traverse the membrane as a helical segment. At 173-207 (GEAIGATVRYLYGSKDSMEAIKVGAGAVEKEKKRQ) the chain is on the cytoplasmic side.

This sequence belongs to the WRB/GET1 family. As to quaternary structure, interacts with GET3.

It is found in the endoplasmic reticulum membrane. In terms of biological role, required for the post-translational delivery of tail-anchored (TA) proteins to the endoplasmic reticulum. Acts as a membrane receptor for soluble GET3, which recognizes and selectively binds the transmembrane domain of TA proteins in the cytosol. The protein is Protein GET1 of Paracoccidioides lutzii (strain ATCC MYA-826 / Pb01) (Paracoccidioides brasiliensis).